Reading from the N-terminus, the 302-residue chain is 4-hydroxy-tetrahydrodipicolinate synthase (302 aa).

Residue Thr55 coordinates pyruvate. The active-site Proton donor/acceptor is the Tyr144. Lys172 (schiff-base intermediate with substrate) is an active-site residue. A pyruvate-binding site is contributed by Val214.

It belongs to the DapA family. In terms of assembly, homotetramer; dimer of dimers.

It localises to the cytoplasm. It catalyses the reaction L-aspartate 4-semialdehyde + pyruvate = (2S,4S)-4-hydroxy-2,3,4,5-tetrahydrodipicolinate + H2O + H(+). It functions in the pathway amino-acid biosynthesis; L-lysine biosynthesis via DAP pathway; (S)-tetrahydrodipicolinate from L-aspartate: step 3/4. Its function is as follows. Catalyzes the condensation of (S)-aspartate-beta-semialdehyde [(S)-ASA] and pyruvate to 4-hydroxy-tetrahydrodipicolinate (HTPA). In Synechococcus sp. (strain CC9311), this protein is 4-hydroxy-tetrahydrodipicolinate synthase.